A 245-amino-acid polypeptide reads, in one-letter code: MIIPAIDLIDGNVVRLYQGDYGQQTTFDLSPLAQLQSYEAQGAKWLHIVDLTGAKDPAKRQTRLISQIVAGLNANIQVGGGIRTEEQVTELLNIGVKRVVIGSLAVKEPELVKQWFIKYGSEAICLALDVNINQSGEKIVAVSGWQSGGGKSLESLVETFSAVGLKHALVTDISRDGTLTGANTALYQEIAASYPDIAWQASGGIATLDDVAAVRDSGAAGIIIGKALLINQFNVVEAIQCWPND.

Catalysis depends on Asp7, which acts as the Proton acceptor. Asp129 acts as the Proton donor in catalysis.

This sequence belongs to the HisA/HisF family.

The protein localises to the cytoplasm. It catalyses the reaction 1-(5-phospho-beta-D-ribosyl)-5-[(5-phospho-beta-D-ribosylamino)methylideneamino]imidazole-4-carboxamide = 5-[(5-phospho-1-deoxy-D-ribulos-1-ylimino)methylamino]-1-(5-phospho-beta-D-ribosyl)imidazole-4-carboxamide. The protein operates within amino-acid biosynthesis; L-histidine biosynthesis; L-histidine from 5-phospho-alpha-D-ribose 1-diphosphate: step 4/9. The protein is 1-(5-phosphoribosyl)-5-[(5-phosphoribosylamino)methylideneamino] imidazole-4-carboxamide isomerase of Shewanella baltica (strain OS195).